Reading from the N-terminus, the 334-residue chain is Holliday junction branch migration complex subunit RuvB (334 aa).

A large ATPase domain (RuvB-L) region spans residues 1 to 181 (MQDRLISGTE…FGIVQRLEFY (181 aa)). Residues Ile-20, Arg-21, Gly-62, Lys-65, Thr-66, Thr-67, 128-130 (EDY), Arg-171, Tyr-181, and Arg-218 each bind ATP. Thr-66 contacts Mg(2+). A small ATPAse domain (RuvB-S) region spans residues 182–252 (SVEDLTHIVS…MAQRALDMLN (71 aa)). Positions 255 to 334 (KAGLDTLDRR…FGMTPPEPKN (80 aa)) are head domain (RuvB-H). Positions 310 and 315 each coordinate DNA.

Belongs to the RuvB family. As to quaternary structure, homohexamer. Forms an RuvA(8)-RuvB(12)-Holliday junction (HJ) complex. HJ DNA is sandwiched between 2 RuvA tetramers; dsDNA enters through RuvA and exits via RuvB. An RuvB hexamer assembles on each DNA strand where it exits the tetramer. Each RuvB hexamer is contacted by two RuvA subunits (via domain III) on 2 adjacent RuvB subunits; this complex drives branch migration. In the full resolvosome a probable DNA-RuvA(4)-RuvB(12)-RuvC(2) complex forms which resolves the HJ.

It is found in the cytoplasm. The enzyme catalyses ATP + H2O = ADP + phosphate + H(+). The RuvA-RuvB-RuvC complex processes Holliday junction (HJ) DNA during genetic recombination and DNA repair, while the RuvA-RuvB complex plays an important role in the rescue of blocked DNA replication forks via replication fork reversal (RFR). RuvA specifically binds to HJ cruciform DNA, conferring on it an open structure. The RuvB hexamer acts as an ATP-dependent pump, pulling dsDNA into and through the RuvAB complex. RuvB forms 2 homohexamers on either side of HJ DNA bound by 1 or 2 RuvA tetramers; 4 subunits per hexamer contact DNA at a time. Coordinated motions by a converter formed by DNA-disengaged RuvB subunits stimulates ATP hydrolysis and nucleotide exchange. Immobilization of the converter enables RuvB to convert the ATP-contained energy into a lever motion, pulling 2 nucleotides of DNA out of the RuvA tetramer per ATP hydrolyzed, thus driving DNA branch migration. The RuvB motors rotate together with the DNA substrate, which together with the progressing nucleotide cycle form the mechanistic basis for DNA recombination by continuous HJ branch migration. Branch migration allows RuvC to scan DNA until it finds its consensus sequence, where it cleaves and resolves cruciform DNA. The polypeptide is Holliday junction branch migration complex subunit RuvB (Acinetobacter baumannii (strain AB307-0294)).